A 225-amino-acid chain; its full sequence is MGHKVNPIGLRLGINRTWDSRWYAGADYSRLLHDDLKLRAHLRRKLSGAGVSRVVIERPAKKPRVTIYAARPGVVIGKKGQDIDVLRKDLTRMAKTDVALNIVEIRKPEIDATLVAENIAQQLERRVAFRRAMKRAVQSAMRLGAQGIRINCGGRLGGAEIARVEWYREGRVPLHTLRADIDYGVATAKTTYGTCGVKVWIFKGEILAHDPLAQDRRAAEQAPQR.

Positions 38 to 106 constitute a KH type-2 domain; that stretch reads LRAHLRRKLS…DVALNIVEIR (69 aa).

This sequence belongs to the universal ribosomal protein uS3 family. In terms of assembly, part of the 30S ribosomal subunit. Forms a tight complex with proteins S10 and S14.

Binds the lower part of the 30S subunit head. Binds mRNA in the 70S ribosome, positioning it for translation. This chain is Small ribosomal subunit protein uS3, found in Gluconacetobacter diazotrophicus (strain ATCC 49037 / DSM 5601 / CCUG 37298 / CIP 103539 / LMG 7603 / PAl5).